We begin with the raw amino-acid sequence, 109 residues long: Spermidine export protein MdtI (109 aa).

A run of 4 helical transmembrane segments spans residues 6 to 26, 36 to 56, 64 to 84, and 88 to 108; these read WVHA…NVFL, IFGL…SQAV, AYAL…WILF, and LNRK…MVKL.

The protein belongs to the drug/metabolite transporter (DMT) superfamily. Small multidrug resistance (SMR) (TC 2.A.7.1) family. MdtI subfamily. Forms a complex with MdtJ.

Its subcellular location is the cell inner membrane. Catalyzes the excretion of spermidine. In Escherichia coli O81 (strain ED1a), this protein is Spermidine export protein MdtI.